A 66-amino-acid polypeptide reads, in one-letter code: Venom protein 27.1 (66 aa).

Residues 1–22 (MNTKTLIVVFLVCLLVSEVVLA) form the signal peptide.

Post-translationally, contains 1 disulfide bond. As to expression, expressed by the venom gland.

Its subcellular location is the secreted. This is Venom protein 27.1 from Lychas mucronatus (Chinese swimming scorpion).